The sequence spans 687 residues: Phage-like element PBSX protein XkdV (687 aa).

It to B.subtilis YqcC.

This chain is Phage-like element PBSX protein XkdV (xkdV), found in Bacillus subtilis (strain 168).